Here is a 144-residue protein sequence, read N- to C-terminus: Large ribosomal subunit protein uL13 (144 aa).

It belongs to the universal ribosomal protein uL13 family. In terms of assembly, part of the 50S ribosomal subunit.

Its function is as follows. This protein is one of the early assembly proteins of the 50S ribosomal subunit, although it is not seen to bind rRNA by itself. It is important during the early stages of 50S assembly. The protein is Large ribosomal subunit protein uL13 of Clostridium botulinum (strain Alaska E43 / Type E3).